The chain runs to 339 residues: Probable protein phosphatase 2C 28 (339 aa).

The region spanning 87–334 (DHGYHLVKGQ…DDISCVVVSF (248 aa)) is the PPM-type phosphatase domain. Mn(2+) is bound by residues Asp-124, Gly-125, Asp-286, and Asp-325.

It belongs to the PP2C family. The cofactor is Mg(2+). Requires Mn(2+) as cofactor.

The catalysed reaction is O-phospho-L-seryl-[protein] + H2O = L-seryl-[protein] + phosphate. The enzyme catalyses O-phospho-L-threonyl-[protein] + H2O = L-threonyl-[protein] + phosphate. The chain is Probable protein phosphatase 2C 28 from Arabidopsis thaliana (Mouse-ear cress).